Reading from the N-terminus, the 288-residue chain is 11-beta-hydroxysteroid dehydrogenase 1 (288 aa).

At 1–4 the chain is on the cytoplasmic side; sequence MKKY. Residues 5–20 form a helical; Signal-anchor for type II membrane protein membrane-spanning segment; sequence LLPVLVLCLGYYYSTN. Residues 21-288 are Lumenal-facing; the sequence is EEFRPEMLQG…SYNRDLFVSN (268 aa). Residues 37–63, 88–89, and 115–117 contribute to the NADP(+) site; these read GASK…TARS, TM, and NHI. A glycan (N-linked (GlcNAc...) asparagine) is linked at Asn158. Ser166 contributes to the substrate binding site. Tyr179 functions as the Proton acceptor in the catalytic mechanism. Residue 179–183 participates in NADP(+) binding; sequence YSASK. Asn203 is a glycosylation site (N-linked (GlcNAc...) asparagine). NADP(+)-binding positions include 212–218 and 214–218; these read GFIDTET and IDTET.

Belongs to the short-chain dehydrogenases/reductases (SDR) family. As to quaternary structure, homodimer. Post-translationally, glycosylated. As to expression, liver, kidney, lung and testis. Brain. Expressed in liver (at protein level).

It is found in the endoplasmic reticulum membrane. It carries out the reaction an 11beta-hydroxysteroid + NADP(+) = an 11-oxosteroid + NADPH + H(+). The enzyme catalyses corticosterone + NADP(+) = 11-dehydrocorticosterone + NADPH + H(+). It catalyses the reaction a 7beta-hydroxysteroid + NADP(+) = a 7-oxosteroid + NADPH + H(+). The catalysed reaction is 7-oxocholesterol + NADPH + H(+) = 7beta-hydroxycholesterol + NADP(+). It carries out the reaction chenodeoxycholate + NADP(+) = 7-oxolithocholate + NADPH + H(+). The enzyme catalyses 7-oxolithocholate + NADPH + H(+) = ursodeoxycholate + NADP(+). It catalyses the reaction glycochenodeoxycholate + NADP(+) = 7-oxoglycolithocholate + NADPH + H(+). The catalysed reaction is taurochenodeoxycholate + NADP(+) = 7-oxotaurolithocholate + NADPH + H(+). It carries out the reaction tauroursodeoxycholate + NADP(+) = 7-oxotaurolithocholate + NADPH + H(+). The enzyme catalyses glycoursodeoxycholate + NADP(+) = 7-oxoglycolithocholate + NADPH + H(+). It catalyses the reaction 7-oxopregnenolone + NADPH + H(+) = 7beta-hydroxypregnenolone + NADP(+). The catalysed reaction is 3beta,7alpha-dihydroxyandrost-5-en-17-one + NADP(+) = 3beta-hydroxy-5-androstene-7,17-dione + NADPH + H(+). It carries out the reaction 3beta-hydroxy-5-androstene-7,17-dione + NADPH + H(+) = 3beta,7beta-dihydroxyandrost-5-en-17-one + NADP(+). The enzyme catalyses 3beta-hydroxy-5alpha-androstane-7,17-dione + NADPH + H(+) = 3beta,7beta-dihydroxy-5alpha-androstan-17-one + NADP(+). In terms of biological role, controls the reversible conversion of biologically active glucocorticoids such as 11-dehydrocorticosterone to corticosterone using NADP(H). Participates in the corticosteroid receptor-mediated anti-inflammatory response, as well as metabolic and homeostatic processes. Bidirectional in vitro, predominantly functions as a reductase in vivo, thereby increasing the concentration of active glucocorticoids. It has broad substrate specificity, besides glucocorticoids, it accepts other steroid and sterol substrates. Interconverts 7-oxo- and 7-hydroxy-neurosteroids such as 7-oxopregnenolone and 7beta-hydroxypregnenolone, 7-oxodehydroepiandrosterone (3beta-hydroxy-5-androstene-7,17-dione) and 7beta-hydroxydehydroepiandrosterone (3beta,7beta-dihydroxyandrost-5-en-17-one), among others. Catalyzes the stereo-specific conversion of the major dietary oxysterol, 7-ketocholesterol (7-oxocholesterol), into the more polar 7-beta-hydroxycholesterol metabolite. 7-oxocholesterol is one of the most important oxysterols, it participates in several events such as induction of apoptosis, accumulation in atherosclerotic lesions, lipid peroxidation, and induction of foam cell formation. Mediates the 7-oxo reduction of 7-oxolithocholate mainly to chenodeoxycholate, and to a lesser extent to ursodeoxycholate, both in its free form and when conjugated to glycine or taurine, providing a link between glucocorticoid activation and bile acid metabolism. Catalyzes the synthesis of 7-beta-25-dihydroxycholesterol from 7-oxo-25-hydroxycholesterol in vitro, which acts as a ligand for the G-protein-coupled receptor (GPCR) Epstein-Barr virus-induced gene 2 (EBI2) and may thereby regulate immune cell migration. The chain is 11-beta-hydroxysteroid dehydrogenase 1 from Rattus norvegicus (Rat).